Here is a 412-residue protein sequence, read N- to C-terminus: Membrane fusion protein MtrC (412 aa).

An N-terminal signal peptide occupies residues 1 to 24; that stretch reads MAFYASKAMRAAALAAAVALALSS. Residue C25 is the site of N-palmitoyl cysteine attachment. Residue C25 is the site of S-diacylglycerol cysteine attachment. The interval 377-412 is disordered; the sequence is AKKVTPKEWAPSENQAAAPQAGVQTASEAKPASEAK. Residues 388–403 are compositionally biased toward polar residues; the sequence is SENQAAAPQAGVQTAS.

This sequence belongs to the membrane fusion protein (MFP) (TC 8.A.1) family.

Its subcellular location is the cell inner membrane. Cell membrane lipoprotein, involved in cell membrane permeability to hydrophobic compounds such as antibiotics, dyes and detergents. This chain is Membrane fusion protein MtrC (mtrC), found in Neisseria gonorrhoeae.